A 181-amino-acid chain; its full sequence is MTPTIRPDDPARATVEIATEDAAWDALDLEALAGRAVDATLVALDLPPAAFEVSILACDDARIATLNGEFRGKPTPTNVLSWPAEDRAPDTPGGAPHLPDPGDPMAAELGDLALAHGTCAREAAEAGKPLADHVTHLIVHGTLHLLGFDHETDADAARMEGLEVKILQTLNMANPYETPMV.

3 residues coordinate Zn(2+): histidine 140, histidine 144, and histidine 150.

The protein belongs to the endoribonuclease YbeY family. Requires Zn(2+) as cofactor.

The protein localises to the cytoplasm. In terms of biological role, single strand-specific metallo-endoribonuclease involved in late-stage 70S ribosome quality control and in maturation of the 3' terminus of the 16S rRNA. The polypeptide is Endoribonuclease YbeY (Dinoroseobacter shibae (strain DSM 16493 / NCIMB 14021 / DFL 12)).